The following is a 499-amino-acid chain: Terpentedienyl-diphosphate synthase (499 aa).

Mg(2+)-binding residues include Asp284 and Asp286. A DXDD motif motif is present at residues Asp284–Asp287.

This sequence belongs to the terpene synthase family. As to quaternary structure, monomer. It depends on Mg(2+) as a cofactor.

It carries out the reaction (2E,6E,10E)-geranylgeranyl diphosphate = terpentedienyl diphosphate. It functions in the pathway antibiotic biosynthesis. Involved in the production of the isoprenoid antibiotic terpentecin. Converts geranylgeranyl diphosphate (GGDP) into terpentedienol diphosphate (TDP) by a protonation-initiated cyclization. The sequence is that of Terpentedienyl-diphosphate synthase (cyc1) from Kitasatospora griseola (Streptomyces griseolosporeus).